A 253-amino-acid polypeptide reads, in one-letter code: Ice-binding protein (253 aa).

A signal peptide spans 1–27; that stretch reads MKTLISNSKKVLIPLIMGSIFAGNVMA. Cys75 and Cys93 form a disulfide bridge. Short sequence motifs (ice-binding site motif (T-A/G-X-T/N)) lie at residues 220 to 223 and 232 to 235; these read TGTT and TAVT.

The protein belongs to the ice-binding protein family.

It localises to the secreted. Binds to the surface of ice crystals and inhibits their growth. Has ice recrystallization inhibition (RI) activity (the ability to prevent the formation of larger grains of ice at the expense of smaller grains), which may protect membranes from freezing injury. Has high thermal hysteresis (TH) activity, which is the ability to lower the freezing point of an aqueous solution below its melting point, and thus the freezing of the cell fluid can be prevented protecting the organism from ice damage. The TH activity of this protein is 3.8 degrees Celsius at 14 mM. The polypeptide is Ice-binding protein (Colwellia sp).